Reading from the N-terminus, the 199-residue chain is Protein-methionine-sulfoxide reductase heme-binding subunit MsrQ (199 aa).

5 helical membrane passes run 13–33, 79–99, 120–140, 147–167, and 169–189; these read VLLHLAGFLPLLWLILSVDQG, LLGLWCFFWATLHLVSYALLE, LGVISWLILLALAVTSPQIMM, WQKLHNFVYLVAILAPIHYLW, and VKTLSPQPILYALAALILLLF.

The protein belongs to the MsrQ family. Heterodimer of a catalytic subunit (MsrP) and a heme-binding subunit (MsrQ). FMN serves as cofactor. The cofactor is heme b.

It is found in the cell inner membrane. Functionally, part of the MsrPQ system that repairs oxidized periplasmic proteins containing methionine sulfoxide residues (Met-O), using respiratory chain electrons. Thus protects these proteins from oxidative-stress damage caused by reactive species of oxygen and chlorine generated by the host defense mechanisms. MsrPQ is essential for the maintenance of envelope integrity under bleach stress, rescuing a wide series of structurally unrelated periplasmic proteins from methionine oxidation. MsrQ provides electrons for reduction to the reductase catalytic subunit MsrP, using the quinone pool of the respiratory chain. This is Protein-methionine-sulfoxide reductase heme-binding subunit MsrQ from Pectobacterium carotovorum subsp. carotovorum (strain PC1).